Reading from the N-terminus, the 184-residue chain is Ubiquitin-conjugating enzyme E2-23 kDa (184 aa).

The 148-residue stretch at 1-148 folds into the UBC core domain; the sequence is MSSPSKRREM…VKEYCERYAK (148 aa). Residue C85 is the Glycyl thioester intermediate of the active site. The tract at residues 146 to 184 is disordered; sequence YAKPEDISPEEEEEESDEELSDAEGYDSGDEAIMGHADP. Residues 152 to 175 are compositionally biased toward acidic residues; it reads ISPEEEEEESDEELSDAEGYDSGD.

The protein belongs to the ubiquitin-conjugating enzyme family.

It carries out the reaction S-ubiquitinyl-[E1 ubiquitin-activating enzyme]-L-cysteine + [E2 ubiquitin-conjugating enzyme]-L-cysteine = [E1 ubiquitin-activating enzyme]-L-cysteine + S-ubiquitinyl-[E2 ubiquitin-conjugating enzyme]-L-cysteine.. Its pathway is protein modification; protein ubiquitination. Its function is as follows. Catalyzes the covalent attachment of ubiquitin to other proteins. The protein is Ubiquitin-conjugating enzyme E2-23 kDa (UBC4) of Triticum aestivum (Wheat).